Reading from the N-terminus, the 309-residue chain is Coenzyme PQQ synthesis protein B (309 aa).

The protein belongs to the PqqB family.

Its pathway is cofactor biosynthesis; pyrroloquinoline quinone biosynthesis. In terms of biological role, may be involved in the transport of PQQ or its precursor to the periplasm. The sequence is that of Coenzyme PQQ synthesis protein B from Nitrosococcus oceani (strain ATCC 19707 / BCRC 17464 / JCM 30415 / NCIMB 11848 / C-107).